Here is a 155-residue protein sequence, read N- to C-terminus: NADPH-dependent 7-cyano-7-deazaguanine reductase (155 aa).

The active-site Thioimide intermediate is Cys53. Asp60 functions as the Proton donor in the catalytic mechanism. Substrate is bound by residues 75 to 77 (VES) and 94 to 95 (HE).

This sequence belongs to the GTP cyclohydrolase I family. QueF type 1 subfamily.

It is found in the cytoplasm. The catalysed reaction is 7-aminomethyl-7-carbaguanine + 2 NADP(+) = 7-cyano-7-deazaguanine + 2 NADPH + 3 H(+). Its pathway is tRNA modification; tRNA-queuosine biosynthesis. Catalyzes the NADPH-dependent reduction of 7-cyano-7-deazaguanine (preQ0) to 7-aminomethyl-7-deazaguanine (preQ1). This chain is NADPH-dependent 7-cyano-7-deazaguanine reductase, found in Brucella abortus (strain S19).